We begin with the raw amino-acid sequence, 339 residues long: Lipoate--protein ligase (339 aa).

Positions phenylalanine 31 to glutamine 221 constitute a BPL/LPL catalytic domain. ATP is bound by residues arginine 73, glycine 78–tyrosine 81, lysine 135, and alanine 139. Lysine 135 provides a ligand contact to (R)-lipoate.

The protein belongs to the LplA family.

It carries out the reaction L-lysyl-[lipoyl-carrier protein] + (R)-lipoate + ATP = N(6)-[(R)-lipoyl]-L-lysyl-[lipoyl-carrier protein] + AMP + diphosphate + H(+). The protein operates within protein modification; protein lipoylation via exogenous pathway; protein N(6)-(lipoyl)lysine from lipoate: step 1/2. It functions in the pathway protein modification; protein lipoylation via exogenous pathway; protein N(6)-(lipoyl)lysine from lipoate: step 2/2. Catalyzes specifically the lipoylation of GcvH-L (SpyM50867), likely via the ATP-dependent activation of lipoate to lipoyl-AMP and the transfer of the activated lipoyl onto the lipoyl domain of the target protein. The protein is Lipoate--protein ligase of Streptococcus pyogenes serotype M5 (strain Manfredo).